Reading from the N-terminus, the 894-residue chain is MNQIEPGVQYNYVYDEDEYMIQEEEWDRDLLLDPAWEKQQRKTFTAWCNSHLRKAGTQIENIEEDFRNGLKLMLLLEVISGERLPKPDRGKMRFHKIANVNKALDYIASKGVKLVSIGAEEIVDGNVKMTLGMIWTIILRFAIQDISVEETSAKEGLLLWCQRKTAPYRNVNIQNFHTSWKDGLGLCALIHRHRPDLIDYSKLNKDDPIGNINLAMEIAEKHLDIPKMLDAEDIVNTPKPDERAIMTYVSCFYHAFAGAEQAETAANRICKVLAVNQENERLMEEYERLASELLEWIRRTIPWLENRTPEKTMQAMQKKLEDFRDYRRKHKPPKVQEKCQLEINFNTLQTKLRISNRPAFMPSEGKMVSDIAGAWQRLEQAEKGYEEWLLNEIRRLERLEHLAEKFRQKASTHETWAYGKEQILLQKDYESASLTEVRALLRKHEAFESDLAAHQDRVEQIAAIAQELNELDYHDAVNVNDRCQKICDQWDRLGTLTQKRREALERTEKLLETIDQLHLEFAKRAAPFNNWMEGAMEDLQDMFIVHSIEEIQSLITAHEQFKATLPEADGERQSILAIQNEVEKVIQSYSIRISSSNPYSTVTMDELRNKWDKVKQLVPVRDQSLQEELARQHANERLRRQFAAQANAIGPWIQNKMEEIARSSIQITGALEDQMNQLKQYEHNIINYKNNIDKLEGDHQLIQEALVFDNKHTNYTMEHIRVGWELLLTTIARTINEVETQILTRDAKGITQEQMNEFRASFNHFDRRKNGLMDHEDFRACLISMGYDLGEAEFARIMTLVDPNGQGTVTFQSFIDFMTRETADTDTAEQVIASFRILASDKPYILAEELRRELPPDQAQYCIKRMPPYSGPGSVPGALDYTAFSSALYGESDL.

The tract at residues 1–254 (MNQIEPGVQY…IMTYVSCFYH (254 aa)) is actin-binding. 2 consecutive Calponin-homology (CH) domains span residues 38 to 142 (KQQR…LRFA) and 151 to 257 (TSAK…HAFA). Position 237 is a phosphothreonine (Thr237). Spectrin repeat units lie at residues 281–391 (RLME…WLLN), 401–506 (HLAE…ALER), 516–627 (QLHL…SLQE), and 637–740 (RLRR…EVET). EF-hand domains are found at residues 753–788 (EQMNEFRASFNHFDRRKNGLMDHEDFRACLISMGYD) and 789–824 (LGEAEFARIMTLVDPNGQGTVTFQSFIDFMTRETAD). Ca(2+) contacts are provided by Asp766, Asn770, Asp777, Asp802, Asn804, and Thr808.

Belongs to the alpha-actinin family. In terms of assembly, homodimer; antiparallel. Also forms heterodimers with ACTN3. Interacts with ADAM12, MYOZ1, MYOZ2 and MYOZ3. Interacts via its C-terminal region with the LDB3 PDZ domain. Interacts with XIRP2. Interacts with DST (via N-terminus). Interacts with PARVB. Interacts with SYNPO2. Ubiquitinated by FBXL22, leading to proteasomal degradation.

Its subcellular location is the cytoplasm. The protein resides in the myofibril. It is found in the sarcomere. It localises to the z line. Functionally, F-actin cross-linking protein which is thought to anchor actin to a variety of intracellular structures. This is a bundling protein. This chain is Alpha-actinin-2 (Actn2), found in Mus musculus (Mouse).